Reading from the N-terminus, the 80-residue chain is Acyl carrier protein (80 aa).

A Carrier domain is found at 1 to 79 (MSQEEILQKV…DAVKFIEAKK (79 aa)). At Ser-39 the chain carries O-(pantetheine 4'-phosphoryl)serine.

The protein belongs to the acyl carrier protein (ACP) family. Post-translationally, 4'-phosphopantetheine is transferred from CoA to a specific serine of apo-ACP by AcpS. This modification is essential for activity because fatty acids are bound in thioester linkage to the sulfhydryl of the prosthetic group.

It localises to the cytoplasm. It participates in lipid metabolism; fatty acid biosynthesis. Its function is as follows. Carrier of the growing fatty acid chain in fatty acid biosynthesis. The sequence is that of Acyl carrier protein from Prochlorococcus marinus (strain MIT 9515).